The following is a 231-amino-acid chain: Ribose-5-phosphate isomerase A (231 aa).

Residues 31 to 34, 87 to 90, and 100 to 103 each bind substrate; these read SGST, DGAD, and KGGG. Glu109 acts as the Proton acceptor in catalysis. A substrate-binding site is contributed by Lys127.

This sequence belongs to the ribose 5-phosphate isomerase family. As to quaternary structure, homodimer.

It catalyses the reaction aldehydo-D-ribose 5-phosphate = D-ribulose 5-phosphate. The protein operates within carbohydrate degradation; pentose phosphate pathway; D-ribose 5-phosphate from D-ribulose 5-phosphate (non-oxidative stage): step 1/1. Catalyzes the reversible conversion of ribose-5-phosphate to ribulose 5-phosphate. This is Ribose-5-phosphate isomerase A from Chlamydia pneumoniae (Chlamydophila pneumoniae).